The primary structure comprises 207 residues: ATP-dependent Clp protease proteolytic subunit (207 aa).

The active-site Nucleophile is the Ser-111. The active site involves His-136.

This sequence belongs to the peptidase S14 family. In terms of assembly, fourteen ClpP subunits assemble into 2 heptameric rings which stack back to back to give a disk-like structure with a central cavity, resembling the structure of eukaryotic proteasomes.

It localises to the cytoplasm. It carries out the reaction Hydrolysis of proteins to small peptides in the presence of ATP and magnesium. alpha-casein is the usual test substrate. In the absence of ATP, only oligopeptides shorter than five residues are hydrolyzed (such as succinyl-Leu-Tyr-|-NHMec, and Leu-Tyr-Leu-|-Tyr-Trp, in which cleavage of the -Tyr-|-Leu- and -Tyr-|-Trp bonds also occurs).. In terms of biological role, cleaves peptides in various proteins in a process that requires ATP hydrolysis. Has a chymotrypsin-like activity. Plays a major role in the degradation of misfolded proteins. The chain is ATP-dependent Clp protease proteolytic subunit from Aliivibrio salmonicida (strain LFI1238) (Vibrio salmonicida (strain LFI1238)).